The following is a 355-amino-acid chain: Probable dual-specificity RNA methyltransferase RlmN (355 aa).

The interval Met1 to Ser20 is disordered. Catalysis depends on Glu107, which acts as the Proton acceptor. Positions Thr113–Glu341 constitute a Radical SAM core domain. Cys120 and Cys346 are joined by a disulfide. Positions 127, 131, and 134 each coordinate [4Fe-4S] cluster. S-adenosyl-L-methionine contacts are provided by residues Gly174–Glu175, Ser204, Ser227–His229, and Asn303. The S-methylcysteine intermediate role is filled by Cys346.

The protein belongs to the radical SAM superfamily. RlmN family. Requires [4Fe-4S] cluster as cofactor.

It is found in the cytoplasm. It catalyses the reaction adenosine(2503) in 23S rRNA + 2 reduced [2Fe-2S]-[ferredoxin] + 2 S-adenosyl-L-methionine = 2-methyladenosine(2503) in 23S rRNA + 5'-deoxyadenosine + L-methionine + 2 oxidized [2Fe-2S]-[ferredoxin] + S-adenosyl-L-homocysteine. The catalysed reaction is adenosine(37) in tRNA + 2 reduced [2Fe-2S]-[ferredoxin] + 2 S-adenosyl-L-methionine = 2-methyladenosine(37) in tRNA + 5'-deoxyadenosine + L-methionine + 2 oxidized [2Fe-2S]-[ferredoxin] + S-adenosyl-L-homocysteine. Functionally, specifically methylates position 2 of adenine 2503 in 23S rRNA and position 2 of adenine 37 in tRNAs. This Nostoc sp. (strain PCC 7120 / SAG 25.82 / UTEX 2576) protein is Probable dual-specificity RNA methyltransferase RlmN.